The chain runs to 118 residues: Hisactophilin-1 (118 aa).

G2 is lipidated: N-myristoyl glycine. The tract at residues 8–109 (SHHGHFLSAE…HVSTKEHHDH (102 aa)) is contains several HHXH repeats. 2 consecutive repeat copies span residues 34 to 46 (FHVENHGGKVALK) and 74 to 86 (FHLEHHGGKVSIK). Positions 34 to 86 (FHVENHGGKVALKTHCGKYLSIGDHKQVYLSHHLHGDHSLFHLEHHGGKVSIK) are 2 X 13 AA approximate repeats.

The protein belongs to the hisactophilin family. As to quaternary structure, homodimer or heterodimer of hatA and hatB, linked by a disulfide bond. In terms of processing, phosphorylated.

The protein localises to the cytoplasm. The protein resides in the cell membrane. Its function is as follows. May act as an intracellular pH sensor that links chemotactic signals to responses in the microfilament system of the cells by nucleating actin polymerization or stabilizing the filaments. The polypeptide is Hisactophilin-1 (hatA) (Dictyostelium discoideum (Social amoeba)).